The sequence spans 802 residues: Mitochondrial inner membrane m-AAA protease component AFG3L2 (802 aa).

Residues 1–38 (MAHRCLLLWSRGGCRRGLPPLLVPRGCLGPDRRPCLRT) constitute a mitochondrion transit peptide. A propeptide spans 39-66 (LYQYATVQTASSRRSLLRDVIAAYQRFC) (removed in mature form). The interval 76-124 (YFPNGKNGKKASEPKEAVGEKKEPQPSGPQPSGGAGGGGGKRRGKKEDS) is disordered. Residues 85-99 (KASEPKEAVGEKKEP) are compositionally biased toward basic and acidic residues. At K116 the chain carries N6-succinyllysine. A run of 2 helical transmembrane segments spans residues 142 to 162 (FRMYFLWTALFWGGVMIYFVF) and 250 to 270 (GSFLLSMLPTVLIIAFLLYTI). Positions 309, 310, 351, 352, 353, 354, 355, and 489 each coordinate ATP. Position 573 (H573) interacts with Zn(2+). E574 is an active-site residue. Zn(2+) contacts are provided by H577 and D648. A disordered region spans residues 759–802 (VEGTGSLDEDTSLPEGLQDWNKEREKEEKKEKEKEEPLNEKVVS). Residues 778 to 802 (WNKEREKEEKKEKEKEEPLNEKVVS) show a composition bias toward basic and acidic residues.

In the N-terminal section; belongs to the AAA ATPase family. It in the C-terminal section; belongs to the peptidase M41 family. As to quaternary structure, homohexamer. Forms heterohexamers with SPG7 and AFG3L1. The m-AAA protease is either composed of homohexamers of AFG3L2 or heterohexamers of AFG3L1, AFG3L2 and/or SPG7. Interacts with MAIP1. Interacts with DNAJC19. Interacts with PHB2. It depends on Zn(2+) as a cofactor. Post-translationally, upon import into the mitochondrion, the N-terminal transit peptide is cleaved to generate an intermediate form which undergoes autocatalytic proteolytic processing to generate the proteolytically active mature form. In terms of tissue distribution, highly expressed in the cerebellar Purkinje cells.

It localises to the mitochondrion inner membrane. It carries out the reaction ATP + H2O = ADP + phosphate + H(+). Catalytic component of the m-AAA protease, a protease that plays a key role in proteostasis of inner mitochondrial membrane proteins, and which is essential for axonal and neuron development. AFG3L2 possesses both ATPase and protease activities: the ATPase activity is required to unfold substrates, threading them into the internal proteolytic cavity for hydrolysis into small peptide fragments. The m-AAA protease carries out protein quality control in the inner membrane of the mitochondria by mediating degradation of mistranslated or misfolded polypeptides. The m-AAA protease complex also promotes the processing and maturation of mitochondrial proteins, such as MRPL32/bL32m, PINK1 and SP7. Mediates protein maturation of the mitochondrial ribosomal subunit MRPL32/bL32m by catalyzing the cleavage of the presequence of MRPL32/bL32m prior to assembly into the mitochondrial ribosome. Required for SPG7 maturation into its active mature form after SPG7 cleavage by mitochondrial-processing peptidase (MPP). Required for the maturation of PINK1 into its 52kDa mature form after its cleavage by mitochondrial-processing peptidase (MPP). Acts as a regulator of calcium in neurons by mediating degradation of SMDT1/EMRE before its assembly with the uniporter complex, limiting the availability of SMDT1/EMRE for MCU assembly and promoting efficient assembly of gatekeeper subunits with MCU. Promotes the proteolytic degradation of GHITM upon hyperpolarization of mitochondria: progressive GHITM degradation leads to respiratory complex I degradation and broad reshaping of the mitochondrial proteome by AFG3L2. Also acts as a regulator of mitochondrial glutathione homeostasis by mediating cleavage and degradation of SLC25A39. SLC25A39 cleavage is prevented when SLC25A39 binds iron-sulfur. Involved in the regulation of OMA1-dependent processing of OPA1. May act by mediating processing of OMA1 precursor, participating in OMA1 maturation. The polypeptide is Mitochondrial inner membrane m-AAA protease component AFG3L2 (Mus musculus (Mouse)).